The chain runs to 657 residues: Transketolase (657 aa).

Position 31 (His-31) interacts with substrate. Residues His-71 and 120 to 122 (GPL) each bind thiamine diphosphate. Asp-158 lines the Mg(2+) pocket. 2 residues coordinate thiamine diphosphate: Gly-159 and Asn-188. Mg(2+) is bound by residues Asn-188 and Ile-190. Residues His-262, Arg-354, and Ser-381 each coordinate substrate. His-262 serves as a coordination point for thiamine diphosphate. The active-site Proton donor is the Glu-408. Phe-434 contacts thiamine diphosphate. Residues His-458, Asp-466, and Arg-517 each contribute to the substrate site.

This sequence belongs to the transketolase family. In terms of assembly, homodimer. Mg(2+) is required as a cofactor. The cofactor is Ca(2+). Requires Mn(2+) as cofactor. It depends on Co(2+) as a cofactor. Thiamine diphosphate serves as cofactor.

The enzyme catalyses D-sedoheptulose 7-phosphate + D-glyceraldehyde 3-phosphate = aldehydo-D-ribose 5-phosphate + D-xylulose 5-phosphate. Its pathway is carbohydrate biosynthesis; Calvin cycle. The protein operates within carbohydrate degradation; pentose phosphate pathway. In terms of biological role, catalyzes the transfer of a two-carbon ketol group from a ketose donor to an aldose acceptor, via a covalent intermediate with the cofactor thiamine pyrophosphate. The chain is Transketolase (tklB) from Cereibacter sphaeroides (Rhodobacter sphaeroides).